The primary structure comprises 675 residues: DNA ligase (675 aa).

NAD(+) contacts are provided by residues 34 to 38 (DYAFD), 83 to 84 (SL), and Glu-117. The active-site N6-AMP-lysine intermediate is the Lys-119. Residues Arg-140, Glu-184, Lys-297, and Lys-321 each contribute to the NAD(+) site. Zn(2+) contacts are provided by Cys-415, Cys-418, Cys-433, and Cys-439. Residues 598-675 (LVNRNFEGMK…GEEEFEAMLF (78 aa)) form the BRCT domain.

The protein belongs to the NAD-dependent DNA ligase family. LigA subfamily. Mg(2+) serves as cofactor. The cofactor is Mn(2+).

The catalysed reaction is NAD(+) + (deoxyribonucleotide)n-3'-hydroxyl + 5'-phospho-(deoxyribonucleotide)m = (deoxyribonucleotide)n+m + AMP + beta-nicotinamide D-nucleotide.. DNA ligase that catalyzes the formation of phosphodiester linkages between 5'-phosphoryl and 3'-hydroxyl groups in double-stranded DNA using NAD as a coenzyme and as the energy source for the reaction. It is essential for DNA replication and repair of damaged DNA. The sequence is that of DNA ligase from Prosthecochloris aestuarii (strain DSM 271 / SK 413).